Reading from the N-terminus, the 612-residue chain is Dihydroxy-acid dehydratase (612 aa).

Asp81 is a binding site for Mg(2+). Cys122 is a [2Fe-2S] cluster binding site. Mg(2+) is bound by residues Asp123 and Lys124. The residue at position 124 (Lys124) is an N6-carboxylysine. Cys195 is a [2Fe-2S] cluster binding site. Glu491 contributes to the Mg(2+) binding site. Ser517 (proton acceptor) is an active-site residue.

The protein belongs to the IlvD/Edd family. As to quaternary structure, homodimer. It depends on [2Fe-2S] cluster as a cofactor. Mg(2+) is required as a cofactor.

The enzyme catalyses (2R)-2,3-dihydroxy-3-methylbutanoate = 3-methyl-2-oxobutanoate + H2O. It carries out the reaction (2R,3R)-2,3-dihydroxy-3-methylpentanoate = (S)-3-methyl-2-oxopentanoate + H2O. It functions in the pathway amino-acid biosynthesis; L-isoleucine biosynthesis; L-isoleucine from 2-oxobutanoate: step 3/4. The protein operates within amino-acid biosynthesis; L-valine biosynthesis; L-valine from pyruvate: step 3/4. Its function is as follows. Functions in the biosynthesis of branched-chain amino acids. Catalyzes the dehydration of (2R,3R)-2,3-dihydroxy-3-methylpentanoate (2,3-dihydroxy-3-methylvalerate) into 2-oxo-3-methylpentanoate (2-oxo-3-methylvalerate) and of (2R)-2,3-dihydroxy-3-methylbutanoate (2,3-dihydroxyisovalerate) into 2-oxo-3-methylbutanoate (2-oxoisovalerate), the penultimate precursor to L-isoleucine and L-valine, respectively. In Psychromonas ingrahamii (strain DSM 17664 / CCUG 51855 / 37), this protein is Dihydroxy-acid dehydratase.